The sequence spans 242 residues: Putative S-adenosyl-L-methionine-dependent methyltransferase Mmcs_0580 (242 aa).

S-adenosyl-L-methionine contacts are provided by residues D104 and 134–135 (DL).

This sequence belongs to the UPF0677 family.

In terms of biological role, exhibits S-adenosyl-L-methionine-dependent methyltransferase activity. The sequence is that of Putative S-adenosyl-L-methionine-dependent methyltransferase Mmcs_0580 from Mycobacterium sp. (strain MCS).